We begin with the raw amino-acid sequence, 232 residues long: Ribonuclease 3 (232 aa).

The RNase III domain maps to 5 to 134 (QTVLKNHFAI…FLGALLLDKD (130 aa)). A Mg(2+)-binding site is contributed by Glu-47. Asp-51 is a catalytic residue. Mg(2+) contacts are provided by Asp-120 and Glu-123. Glu-123 is a catalytic residue. Positions 160–229 (DYKTHLQELL…AKNAVEKGLD (70 aa)) constitute a DRBM domain.

It belongs to the ribonuclease III family. As to quaternary structure, homodimer. Mg(2+) serves as cofactor.

The protein resides in the cytoplasm. It carries out the reaction Endonucleolytic cleavage to 5'-phosphomonoester.. Digests double-stranded RNA. Involved in the processing of primary rRNA transcript to yield the immediate precursors to the large and small rRNAs (23S and 16S). Processes some mRNAs, and tRNAs when they are encoded in the rRNA operon. Processes pre-crRNA and tracrRNA of type II CRISPR loci if present in the organism. In Streptococcus pneumoniae (strain Taiwan19F-14), this protein is Ribonuclease 3.